The sequence spans 562 residues: Dihydroxy-acid dehydratase (562 aa).

Residue Cys-55 coordinates [2Fe-2S] cluster. Asp-87 is a binding site for Mg(2+). Position 128 (Cys-128) interacts with [2Fe-2S] cluster. Mg(2+) contacts are provided by Asp-129 and Lys-130. N6-carboxylysine is present on Lys-130. Residue Cys-200 participates in [2Fe-2S] cluster binding. Position 451 (Glu-451) interacts with Mg(2+). Ser-477 functions as the Proton acceptor in the catalytic mechanism.

This sequence belongs to the IlvD/Edd family. Homodimer. It depends on [2Fe-2S] cluster as a cofactor. The cofactor is Mg(2+).

The enzyme catalyses (2R)-2,3-dihydroxy-3-methylbutanoate = 3-methyl-2-oxobutanoate + H2O. The catalysed reaction is (2R,3R)-2,3-dihydroxy-3-methylpentanoate = (S)-3-methyl-2-oxopentanoate + H2O. The protein operates within amino-acid biosynthesis; L-isoleucine biosynthesis; L-isoleucine from 2-oxobutanoate: step 3/4. It participates in amino-acid biosynthesis; L-valine biosynthesis; L-valine from pyruvate: step 3/4. Functionally, functions in the biosynthesis of branched-chain amino acids. Catalyzes the dehydration of (2R,3R)-2,3-dihydroxy-3-methylpentanoate (2,3-dihydroxy-3-methylvalerate) into 2-oxo-3-methylpentanoate (2-oxo-3-methylvalerate) and of (2R)-2,3-dihydroxy-3-methylbutanoate (2,3-dihydroxyisovalerate) into 2-oxo-3-methylbutanoate (2-oxoisovalerate), the penultimate precursor to L-isoleucine and L-valine, respectively. In Cytophaga hutchinsonii (strain ATCC 33406 / DSM 1761 / CIP 103989 / NBRC 15051 / NCIMB 9469 / D465), this protein is Dihydroxy-acid dehydratase.